The primary structure comprises 527 residues: GMP synthase [glutamine-hydrolyzing] (527 aa).

The Glutamine amidotransferase type-1 domain occupies 13 to 202; it reads TILVLDFGSQ…AVDICGAAQK (190 aa). The Nucleophile role is filled by cysteine 89. Active-site residues include histidine 176 and glutamate 178. A GMPS ATP-PPase domain is found at 203 to 402; it reads WSMENFVDTE…MGIPHDLVWR (200 aa). 231 to 237 contacts ATP; the sequence is SGGVDST. Residues arginine 304, aspartate 464, lysine 519, and glutamate 525 each contribute to the XMP site.

Homodimer. The cofactor is Mg(2+).

It localises to the cytoplasm. Its subcellular location is the cytosol. It catalyses the reaction XMP + L-glutamine + ATP + H2O = GMP + L-glutamate + AMP + diphosphate + 2 H(+). It participates in purine metabolism; GMP biosynthesis; GMP from XMP (L-Gln route): step 1/1. In terms of biological role, catalyzes the conversion of xanthine monophosphate (XMP) to GMP in the presence of glutamine and ATP through an adenyl-XMP intermediate. The chain is GMP synthase [glutamine-hydrolyzing] (GUA1) from Yarrowia lipolytica (strain CLIB 122 / E 150) (Yeast).